The following is a 271-amino-acid chain: Aminoglycoside 3'-phosphotransferase (271 aa).

D198 serves as the catalytic Proton acceptor.

The protein belongs to the aminoglycoside phosphotransferase family.

The catalysed reaction is kanamycin A + ATP = kanamycin 3'-phosphate + ADP + H(+). In terms of biological role, resistance to kanamycin and structurally-related aminoglycosides, including amikacin. The chain is Aminoglycoside 3'-phosphotransferase from Salmonella typhimurium.